We begin with the raw amino-acid sequence, 107 residues long: Nucleoid-associated protein Oant_0022 (107 aa).

Belongs to the YbaB/EbfC family. In terms of assembly, homodimer.

It is found in the cytoplasm. The protein resides in the nucleoid. Its function is as follows. Binds to DNA and alters its conformation. May be involved in regulation of gene expression, nucleoid organization and DNA protection. The polypeptide is Nucleoid-associated protein Oant_0022 (Brucella anthropi (strain ATCC 49188 / DSM 6882 / CCUG 24695 / JCM 21032 / LMG 3331 / NBRC 15819 / NCTC 12168 / Alc 37) (Ochrobactrum anthropi)).